We begin with the raw amino-acid sequence, 136 residues long: Acidic phospholipase A2 EC-I (136 aa).

The signal sequence occupies residues 1–16; sequence MKTLWIVAVWLIAVEG. Cystine bridges form between Cys-42–Cys-129, Cys-44–Cys-60, Cys-59–Cys-111, Cys-65–Cys-136, Cys-66–Cys-104, Cys-73–Cys-97, and Cys-91–Cys-102. Residues Tyr-43, Gly-45, and Gly-47 each coordinate Ca(2+). The active site involves His-63. Asp-64 lines the Ca(2+) pocket. Asp-105 is a catalytic residue. Residues 112 to 133 form a may be responsible for inhibition of the platelet-aggregation activity region; sequence LGENVNTYDKKYKSYEDCTEEV.

This sequence belongs to the phospholipase A2 family. Group II subfamily. D49 sub-subfamily. In terms of assembly, monomer. Requires Ca(2+) as cofactor. In terms of tissue distribution, expressed by the venom gland.

It localises to the secreted. It carries out the reaction a 1,2-diacyl-sn-glycero-3-phosphocholine + H2O = a 1-acyl-sn-glycero-3-phosphocholine + a fatty acid + H(+). Functionally, snake venom phospholipase A2 (PLA2) that inhibits human platelet aggregation induced by ADP, collagen and epinephrin (possibly by binding the platelet receptor alpha-IIb/beta-III) and induces mild edema in the foot pads of mice. PLA2 catalyzes the calcium-dependent hydrolysis of the 2-acyl groups in 3-sn-phosphoglycerides. The protein is Acidic phospholipase A2 EC-I of Echis carinatus (Saw-scaled viper).